We begin with the raw amino-acid sequence, 660 residues long: tRNA 5-methylaminomethyl-2-thiouridine biosynthesis bifunctional protein MnmC (660 aa).

The tRNA (mnm(5)s(2)U34)-methyltransferase stretch occupies residues 1-241 (MNDHPAQDAF…KREILRGHLQ (241 aa)). Residues 268–660 (IGAGLAGCAT…FLLRKLIRGT (393 aa)) are FAD-dependent cmnm(5)s(2)U34 oxidoreductase.

The protein in the N-terminal section; belongs to the methyltransferase superfamily. tRNA (mnm(5)s(2)U34)-methyltransferase family. This sequence in the C-terminal section; belongs to the DAO family. FAD is required as a cofactor.

It is found in the cytoplasm. The catalysed reaction is 5-aminomethyl-2-thiouridine(34) in tRNA + S-adenosyl-L-methionine = 5-methylaminomethyl-2-thiouridine(34) in tRNA + S-adenosyl-L-homocysteine + H(+). Functionally, catalyzes the last two steps in the biosynthesis of 5-methylaminomethyl-2-thiouridine (mnm(5)s(2)U) at the wobble position (U34) in tRNA. Catalyzes the FAD-dependent demodification of cmnm(5)s(2)U34 to nm(5)s(2)U34, followed by the transfer of a methyl group from S-adenosyl-L-methionine to nm(5)s(2)U34, to form mnm(5)s(2)U34. The protein is tRNA 5-methylaminomethyl-2-thiouridine biosynthesis bifunctional protein MnmC of Stutzerimonas stutzeri (strain A1501) (Pseudomonas stutzeri).